The primary structure comprises 58 residues: Protein translocase subunit SecE (58 aa).

Residues 36–56 (ILLIGFIGFLMFAIMSLLPGV) form a helical membrane-spanning segment.

The protein belongs to the SecE/SEC61-gamma family. As to quaternary structure, component of the Sec protein translocase complex. Heterotrimer consisting of SecY (alpha), SecG (beta) and SecE (gamma) subunits. The heterotrimers can form oligomers, although 1 heterotrimer is thought to be able to translocate proteins. Interacts with the ribosome. May interact with SecDF, and other proteins may be involved.

The protein localises to the cell membrane. Essential subunit of the Sec protein translocation channel SecYEG. Clamps together the 2 halves of SecY. May contact the channel plug during translocation. The chain is Protein translocase subunit SecE from Halorubrum lacusprofundi (strain ATCC 49239 / DSM 5036 / JCM 8891 / ACAM 34).